Here is a 411-residue protein sequence, read N- to C-terminus: UPF0761 membrane protein PSPA7_4558 (411 aa).

6 helical membrane passes run 36 to 56, 92 to 112, 132 to 152, 174 to 194, 207 to 229, and 244 to 264; these read LFAVVPMMTVMFSMLSLIPAF, HLTWVGVVFLAVTAFTMLVTI, FLLYWAILSLGPLLLGAGFAV, LLGLMPLAFSVAAFTLLYSAV, GGMFTAVLFEAAKTLFGLYVSLF, and IFLLWIYLSWMIVLFGAVLVC.

This sequence belongs to the UPF0761 family.

The protein resides in the cell inner membrane. The polypeptide is UPF0761 membrane protein PSPA7_4558 (Pseudomonas paraeruginosa (strain DSM 24068 / PA7) (Pseudomonas aeruginosa (strain PA7))).